We begin with the raw amino-acid sequence, 78 residues long: Cell division topological specificity factor (78 aa).

Belongs to the MinE family.

Prevents the cell division inhibition by proteins MinC and MinD at internal division sites while permitting inhibition at polar sites. This ensures cell division at the proper site by restricting the formation of a division septum at the midpoint of the long axis of the cell. This chain is Cell division topological specificity factor, found in Helicobacter hepaticus (strain ATCC 51449 / 3B1).